The following is a 624-amino-acid chain: Kelch-like protein diablo (624 aa).

Residues 1-55 (MGDPLLPGSTGLGSGSATAATGGSVTAGSGLGNGGTGGAERPPSPARLTHTSEKH) form a disordered region. Residues 15–28 (GSATAATGGSVTAG) show a composition bias toward low complexity. Residues 29–38 (SGLGNGGTGG) show a composition bias toward gly residues. The BTB domain occupies 73-140 (CDVVLNVGGR…CYTAHIIVEE (68 aa)). The region spanning 175–277 (CLGIRAFADT…SPKFLVGTVG (103 aa)) is the BACK domain. Kelch repeat units follow at residues 324–370 (VLFA…VLND), 372–418 (LYAV…VLDG), 419–465 (FLYA…VLSG), 467–512 (LYAI…VFNN), 514–559 (IYAV…VVNG), and 560–606 (QLYA…VMRA).

It functions in the pathway protein modification; protein ubiquitination. Functionally, probable substrate-specific adapter of an E3 ubiquitin-protein ligase complex which mediates the ubiquitination and subsequent proteasomal degradation of target proteins. May have a role in synapse differentiation and growth. This chain is Kelch-like protein diablo, found in Drosophila grimshawi (Hawaiian fruit fly).